We begin with the raw amino-acid sequence, 81 residues long: UPF0349 protein SE_0633 (81 aa).

Belongs to the UPF0349 family.

In Staphylococcus epidermidis (strain ATCC 12228 / FDA PCI 1200), this protein is UPF0349 protein SE_0633.